The chain runs to 1013 residues: Lysosomal alpha-mannosidase (1013 aa).

Positions 1–49 (MGTGPLTSGVRAGGGNTGWLWMSSCNLGSPVLPISFLFWLLLAAPGARA) are cleaved as a signal peptide. Disulfide bonds link Cys55/Cys358 and Cys268/Cys273. Zn(2+) contacts are provided by His72, Asp74, and Asp196. Asp196 serves as the catalytic Nucleophile. Asn310, Asn345, and Asn367 each carry an N-linked (GlcNAc...) asparagine glycan. Cys412 and Cys472 form a disulfide bridge. Zn(2+) is bound at residue His446. N-linked (GlcNAc...) asparagine glycans are attached at residues Asn489, Asn497, Asn544, Asn633, Asn646, Asn693, Asn767, and Asn931. Cys493 and Cys501 form a disulfide bridge.

Belongs to the glycosyl hydrolase 38 family. Requires Zn(2+) as cofactor.

The protein localises to the lysosome. The enzyme catalyses Hydrolysis of terminal, non-reducing alpha-D-mannose residues in alpha-D-mannosides.. Functionally, necessary for the catabolism of N-linked carbohydrates released during glycoprotein turnover. The protein is Lysosomal alpha-mannosidase (Man2b1) of Mus musculus (Mouse).